The sequence spans 286 residues: Shikimate dehydrogenase (NADP(+)) (286 aa).

Shikimate is bound by residues 20-22 (SLS) and T67. K71 functions as the Proton acceptor in the catalytic mechanism. The shikimate site is built by N92 and D107. NADP(+) contacts are provided by residues 132-136 (GAGGA) and M228. Y230 lines the shikimate pocket. Residue G251 coordinates NADP(+).

Belongs to the shikimate dehydrogenase family. Homodimer.

It carries out the reaction shikimate + NADP(+) = 3-dehydroshikimate + NADPH + H(+). The protein operates within metabolic intermediate biosynthesis; chorismate biosynthesis; chorismate from D-erythrose 4-phosphate and phosphoenolpyruvate: step 4/7. Its function is as follows. Involved in the biosynthesis of the chorismate, which leads to the biosynthesis of aromatic amino acids. Catalyzes the reversible NADPH linked reduction of 3-dehydroshikimate (DHSA) to yield shikimate (SA). The chain is Shikimate dehydrogenase (NADP(+)) from Geobacter sulfurreducens (strain ATCC 51573 / DSM 12127 / PCA).